The chain runs to 64 residues: Large ribosomal subunit protein bL35 (64 aa).

Belongs to the bacterial ribosomal protein bL35 family.

The protein is Large ribosomal subunit protein bL35 of Micrococcus luteus (strain ATCC 4698 / DSM 20030 / JCM 1464 / CCM 169 / CCUG 5858 / IAM 1056 / NBRC 3333 / NCIMB 9278 / NCTC 2665 / VKM Ac-2230) (Micrococcus lysodeikticus).